The chain runs to 119 residues: Thioredoxin H4 (119 aa).

The Thioredoxin domain occupies 2-115 (AAEEGQVIGC…LQAKIVKHTG (114 aa)). Residues cysteine 40 and cysteine 43 each act as nucleophile in the active site. A disulfide bond links cysteine 40 and cysteine 43.

The protein belongs to the thioredoxin family. Plant H-type subfamily. In terms of assembly, interacts with MDH1.

The protein localises to the cytoplasm. Its function is as follows. Thiol-disulfide oxidoreductase probably involved in the redox regulation of a number of cytosolic enzymes. Possesses insulin disulfide bonds reducing activity. The polypeptide is Thioredoxin H4 (TRX4) (Arabidopsis thaliana (Mouse-ear cress)).